A 473-amino-acid polypeptide reads, in one-letter code: H(+)/Cl(-) exchange transporter ClcA (473 aa).

Residues 1 to 32 lie on the Cytoplasmic side of the membrane; that stretch reads MKTDTPSLETPQAARLRRRQLIRQLLERDKTP. The helical transmembrane segment at 33–69 threads the bilayer; the sequence is LAILFMAAVVGTLVGLAAVAFDKGVAWLQNQRMGALV. The Periplasmic portion of the chain corresponds to 70-76; it reads HTADNYP. A helical membrane pass occupies residues 77–100; it reads LLLTVAFLCSAVLAMFGYFLVRKY. Positions 106-110 match the Selectivity filter part_1 motif; sequence GSGIP. A chloride-binding site is contributed by Ser107. The segment at residues 109 to 116 is an intramembrane region (helical); that stretch reads IPEIEGAL. At 117-123 the chain is on the cytoplasmic side; that stretch reads EDQRPVR. 2 helical membrane-spanning segments follow: residues 124–141 and 148–166; these read WWRV…TLGG and EGPT…LDIF. The Selectivity filter part_2 motif lies at 146-150; it reads GREGP. The Cytoplasmic portion of the chain corresponds to 167-176; the sequence is RLKGDEARHT. 2 intramembrane regions (helical) span residues 177 to 189 and 193 to 201; these read LLAT…LAAA and PLAGILFII. Residues 202–214 are Cytoplasmic-facing; that stretch reads EEMRPQFRYTLIS. A helical membrane pass occupies residues 215-232; that stretch reads IKAVFIGVIMSTIMYRIF. Residues 233 to 252 are Periplasmic-facing; it reads NHEVALIDVGKLSDAPLNTL. Residues 253 to 281 form a helical membrane-spanning segment; it reads WLYLILGIIFGIFGPIFNKWVLGMQDLLH. The Cytoplasmic segment spans residues 282–287; it reads RVHGGN. The chain crosses the membrane as a helical span at residues 288–309; it reads ITKWILMGGAIGGLCGLLGFVA. Over 310-329 the chain is Periplasmic; that stretch reads PATSGGGFNLIPIATAGNFS. Helical transmembrane passes span 330–349 and 355–376; these read MGML…LCFS and GIFA…MVAV. Positions 355–359 match the Selectivity filter part_3 motif; that stretch reads GIFAP. Chloride-binding residues include Ile356 and Phe357. Over 377 to 386 the chain is Periplasmic; it reads ELFPQYHLEA. The helical intramembrane region spans 387-401; it reads GTFAIAGMGALLAAS. The segment at residues 402-404 is an intramembrane region (note=Loop between two helices); that stretch reads IRA. The segment at residues 405–416 is an intramembrane region (helical); that stretch reads PLTGIILVLEMT. An intramembrane region (note=Loop between two helices) is located at residues 417–421; the sequence is DNYQL. The helical transmembrane segment at 422-438 threads the bilayer; it reads ILPMIITGLGATLLAQF. The Cytoplasmic segment spans residues 439-473; the sequence is TGGKPLYSAILARTLAKQEAEQLARSKAASASENT. Residue Tyr445 participates in chloride binding.

The protein belongs to the chloride channel (TC 2.A.49) family. ClcA subfamily. As to quaternary structure, homodimer.

The protein resides in the cell inner membrane. It catalyses the reaction 2 chloride(in) + H(+)(out) = 2 chloride(out) + H(+)(in). Proton-coupled chloride transporter. Functions as antiport system and exchanges two chloride ions for 1 proton. Probably acts as an electrical shunt for an outwardly-directed proton pump that is linked to amino acid decarboxylation, as part of the extreme acid resistance (XAR) response. This chain is H(+)/Cl(-) exchange transporter ClcA, found in Escherichia coli O9:H4 (strain HS).